The following is a 382-amino-acid chain: MIRYDKYDKMVWEGCKNKITFHLSERETEIVFYLFFKYEVEILTETDLIKKIVRDRRFKNVKSITTLDENYSLIATEFFCEKLKELKEKGREEDISELLDELESYMENITSSFSSFGSGEGYKSYTDPKKKLELTEKLLKNNKLKEFMKVLGKFKRMAIKKYKTKIKHFSGEKYSINLGNNLINLLSSEYKNFAEEILFVDLLRRYNENKPLNYKILENNENCGDFVVCLDLSGSMRGNKEIWAKAIALCLMDISLKRNKRYISILFDDGVRDIKIYEKKVSFDEILEFASVFYGGGTNFEKPLREALKFNGDIVFITDGECEVSLEFLEKIKEEKQRRKIKIYSICINTKPTVSLRQISDVSVTIYELTSKTAEKVFDMLI.

This is an uncharacterized protein from Methanocaldococcus jannaschii (strain ATCC 43067 / DSM 2661 / JAL-1 / JCM 10045 / NBRC 100440) (Methanococcus jannaschii).